Consider the following 503-residue polypeptide: Probable cytosol aminopeptidase (503 aa).

Lysine 270 and aspartate 275 together coordinate Mn(2+). Lysine 282 is a catalytic residue. Positions 293, 352, and 354 each coordinate Mn(2+). Residue arginine 356 is part of the active site.

This sequence belongs to the peptidase M17 family. It depends on Mn(2+) as a cofactor.

The protein resides in the cytoplasm. The catalysed reaction is Release of an N-terminal amino acid, Xaa-|-Yaa-, in which Xaa is preferably Leu, but may be other amino acids including Pro although not Arg or Lys, and Yaa may be Pro. Amino acid amides and methyl esters are also readily hydrolyzed, but rates on arylamides are exceedingly low.. It catalyses the reaction Release of an N-terminal amino acid, preferentially leucine, but not glutamic or aspartic acids.. Its function is as follows. Presumably involved in the processing and regular turnover of intracellular proteins. Catalyzes the removal of unsubstituted N-terminal amino acids from various peptides. The polypeptide is Probable cytosol aminopeptidase (Yersinia enterocolitica serotype O:8 / biotype 1B (strain NCTC 13174 / 8081)).